A 286-amino-acid chain; its full sequence is F-box/SPRY domain-containing protein 1 (286 aa).

A2 is modified (N-acetylalanine). Residues 33 to 82 (SGVGGRLPSRVLELVFSYLELSELRSCALVCKHWYRCLHGDENSEVWRSL) enclose the F-box domain. The 193-residue stretch at 92–284 (LRTDILCNLP…VTLVYLGKPL (193 aa)) folds into the B30.2/SPRY domain.

This sequence belongs to the FBXO45/Fsn family. In terms of assembly, forms a complex with MYCBP2 and SKP1. Interacts with HEY1; leading to FBXO45 nuclear translocation. Interacts (via SPRY domain) with CDH2. In terms of tissue distribution, expressed speciffically in the central nervous system, including cerebellum, medulla oblongata, olfactory bulb, hippocampus, cortex and brain stem.

It localises to the secreted. It is found in the postsynaptic cell membrane. The protein localises to the presynaptic cell membrane. The protein resides in the nucleus. The protein operates within protein modification; protein ubiquitination. Its function is as follows. Component of E3 ubiquitin ligase complex consisting of FBXO45, MYCBP2 and SKP1. Functions in substrate recognition but plays also an important role in assembly of the complex. Required for normal neuromuscular synaptogenesis, axon pathfinding and neuronal migration. Regulates neuron migration during brain development through interaction with N-cadherin/CDH2 after secretion via a non-classical mechanism. Plays a role in the regulation of neurotransmission at mature neurons. May control synaptic activity by controlling UNC13A via ubiquitin dependent pathway. Specifically recognizes TP73, promoting its ubiquitination and degradation. Polyubiquitinates NMNAT2, an adenylyltransferase that acts as an axon maintenance factor, and regulates its stability and degradation by the proteasome. Acts also by ubiquitinating FBXW7 during prolonged mitotic arrest and promotes FBXW7 proteasomal degradation. Induces subsequently an increase in mitotic slippage and prevents mitotic cell death. In response to influenza infection, mediates interferon-lambda receptor IFNLR1 polyubiquitination and degradation through the ubiquitin-proteasome system by docking with its intracellular receptor domain. The chain is F-box/SPRY domain-containing protein 1 from Mus musculus (Mouse).